A 343-amino-acid chain; its full sequence is Dihydroorotate dehydrogenase (quinone) (343 aa).

FMN contacts are provided by residues 61-65 and T85; that span reads AGLDK. K65 serves as a coordination point for substrate. 110 to 114 serves as a coordination point for substrate; it reads NRMGF. 2 residues coordinate FMN: N138 and N171. A substrate-binding site is contributed by N171. S174 acts as the Nucleophile in catalysis. A substrate-binding site is contributed by N176. FMN-binding residues include K216 and T244. 245–246 serves as a coordination point for substrate; that stretch reads NT. Residues G267, G296, and 317 to 318 each bind FMN; that span reads YS.

It belongs to the dihydroorotate dehydrogenase family. Type 2 subfamily. As to quaternary structure, monomer. FMN serves as cofactor.

The protein resides in the cell membrane. The enzyme catalyses (S)-dihydroorotate + a quinone = orotate + a quinol. The protein operates within pyrimidine metabolism; UMP biosynthesis via de novo pathway; orotate from (S)-dihydroorotate (quinone route): step 1/1. In terms of biological role, catalyzes the conversion of dihydroorotate to orotate with quinone as electron acceptor. The chain is Dihydroorotate dehydrogenase (quinone) from Pseudomonas syringae pv. syringae (strain B728a).